Reading from the N-terminus, the 391-residue chain is S-adenosylmethionine synthase 5 (391 aa).

Mg(2+) is bound at residue Glu-9. Position 15 (His-15) interacts with ATP. Residue Glu-43 coordinates K(+). Glu-56 and Gln-99 together coordinate L-methionine. ATP contacts are provided by residues 167 to 169 (DGK), 235 to 238 (SGRF), Asp-246, 252 to 253 (RK), Ala-269, Lys-273, and Lys-277. Residue Asp-246 coordinates L-methionine. Residue Lys-277 participates in L-methionine binding.

Belongs to the AdoMet synthase family. In terms of assembly, homotetramer. Mn(2+) serves as cofactor. It depends on Mg(2+) as a cofactor. The cofactor is Co(2+). Requires K(+) as cofactor.

The protein resides in the cytoplasm. The catalysed reaction is L-methionine + ATP + H2O = S-adenosyl-L-methionine + phosphate + diphosphate. Its pathway is amino-acid biosynthesis; S-adenosyl-L-methionine biosynthesis; S-adenosyl-L-methionine from L-methionine: step 1/1. Functionally, catalyzes the formation of S-adenosylmethionine from methionine and ATP. The reaction comprises two steps that are both catalyzed by the same enzyme: formation of S-adenosylmethionine (AdoMet) and triphosphate, and subsequent hydrolysis of the triphosphate. This chain is S-adenosylmethionine synthase 5 (METK5), found in Vitis vinifera (Grape).